The chain runs to 313 residues: MLKMESTQQMASSIINSSFEAAVVAATSTLELMGIQYDYNEVYTRVKSKFDLVMDDSGVKNNLMGKAITIDQALNGKFGSAIRNRNWMADSRTVAKLDEDVNKLRMMLSSKGIDQKMRVLNACFSVKRVPGKSSSIVKCTKLMKDKLERGEVEVDDSFVEEKMEVDTINWKLRYDQLEKRFESLKHRVNEKYNTWVVKARKVNENMNSLQNVISQQQAHINELQMYNNKLERDLQSKIGSVVSSIEWYLRSMELSDDVKVDIEQQLNSIDQLNPVNAIDDFESVLRNLISDYDRLFIMFKGLLQQCNYTCTYE.

An RNA-binding region spans residues 1–149 (MLKMESTQQM…TKLMKDKLER (149 aa)). A dimerization region spans residues 150–206 (GEVEVDDSFVEEKMEVDTINWKLRYDQLEKRFESLKHRVNEKYNTWVVKARKVNENM). A coiled-coil region spans residues 166-237 (DTINWKLRYD…NKLERDLQSK (72 aa)). An interaction with host ZC3H7B region spans residues 170-234 (WKLRYDQLEK…MYNNKLERDL (65 aa)). The segment at 208-313 (SLQNVISQQQ…QQCNYTCTYE (106 aa)) is interaction with host EIF4G1.

The protein belongs to the rotavirus NSP3 family. Homodimer. Interacts (via the coiled-coil region) with host ZC3H7B (via LD motif). Interacts with host EIF4G1.

Its subcellular location is the host cytoplasm. In terms of biological role, plays an important role in stimulating the translation of viral mRNAs. These mRNAs are capped but not polyadenylated, instead terminating in a conserved sequence 'GACC' at the 3' that is recognized by NSP3, which competes with host PABPC1 for EIF4G1 binding. The interaction between NSP3 and host EIF4G1 stabilizes the EIF4E-EIF4G1 interaction, thereby facilitating the initiation of capped mRNA translation. The chain is Non-structural protein 3 from Rotavirus A (strain RVA/Human/Japan/AU-1/1982/G3P3[9]) (RV-A).